Reading from the N-terminus, the 456-residue chain is Cobyrinate a,c-diamide synthase (456 aa).

One can recognise a GATase cobBQ-type domain in the interval 247–439; it reads PIAIARDRAF…LHLHFGGKPW (193 aa). Catalysis depends on C330, which acts as the Nucleophile.

It belongs to the CobB/CbiA family. Mg(2+) serves as cofactor.

The catalysed reaction is cob(II)yrinate + 2 L-glutamine + 2 ATP + 2 H2O = cob(II)yrinate a,c diamide + 2 L-glutamate + 2 ADP + 2 phosphate + 2 H(+). The protein operates within cofactor biosynthesis; adenosylcobalamin biosynthesis; cob(II)yrinate a,c-diamide from sirohydrochlorin (anaerobic route): step 10/10. In terms of biological role, catalyzes the ATP-dependent amidation of the two carboxylate groups at positions a and c of cobyrinate, using either L-glutamine or ammonia as the nitrogen source. The sequence is that of Cobyrinate a,c-diamide synthase from Synechococcus sp. (strain ATCC 27144 / PCC 6301 / SAUG 1402/1) (Anacystis nidulans).